The primary structure comprises 674 residues: MAASDAVLDKLESLKNQINYHNKLYYVLDAPELPDAEYDKLFQELQAIEQQFPELVTEDSPTQRVGAAPLDSFASIEHKRPMLSLDNVFNVEELFAFDKRIRDRINADASLEYSCEPKFDGIAASLLYENGRLKTAATRGDGTVGEDITQNMRTIGSVPLKLEGNNIPAVLEVRGEVYMPKAGFLRINEEALAKNEKTFVNPRNAAAGSLRQLNPQITAKRPLVFCAYNVGVVEGGELPATHYETLTQLFEWGFLVSEERRIAKGIEECEAYYHYLEAKRESLAYDIDGIVFKVNAFDLQERLGFVSRAPRWAIAHKFPAQEALTVLHDVEFQVGRTGAITPVAKLQPIFVGGVTVSNATLHNKDEIERLGIRVGDTVIVRRAGDVIPQIVSIVESKRPQDAREIKFPTACPVCGSDVESVEGEAAIRCTGGLVCEAQRKESIKHFASRQAMDIDGLGDKIVDQLVDNKLVNDVADLYTLDIPTLAGLERLGAKSAANLVAAIEASKQTSLDKILYALGIREVGRATARNLANHFCTLNKVMDATQEQLIEVTDVGPVVAHYVVDFFAQANNREVIEKLIAAGVNWPDIEKVDGVKPLEGTTYVLTGSLESLSRDEAKDKLQALGAKVSGSVSAKTTCVVAGPGAGSKLAKAEKLGLAILDEVGLLALLEEHGV.

NAD(+)-binding positions include 35–39 (DAEYD), 84–85 (SL), and E116. The active-site N6-AMP-lysine intermediate is the K118. NAD(+)-binding residues include R139, E176, K293, and K317. The Zn(2+) site is built by C411, C414, C429, and C435. One can recognise a BRCT domain in the interval 593-674 (DGVKPLEGTT…LLALLEEHGV (82 aa)).

This sequence belongs to the NAD-dependent DNA ligase family. LigA subfamily. Mg(2+) is required as a cofactor. Requires Mn(2+) as cofactor.

The catalysed reaction is NAD(+) + (deoxyribonucleotide)n-3'-hydroxyl + 5'-phospho-(deoxyribonucleotide)m = (deoxyribonucleotide)n+m + AMP + beta-nicotinamide D-nucleotide.. Its function is as follows. DNA ligase that catalyzes the formation of phosphodiester linkages between 5'-phosphoryl and 3'-hydroxyl groups in double-stranded DNA using NAD as a coenzyme and as the energy source for the reaction. It is essential for DNA replication and repair of damaged DNA. In Saccharophagus degradans (strain 2-40 / ATCC 43961 / DSM 17024), this protein is DNA ligase.